The following is a 201-amino-acid chain: Retinol-binding protein 4 (201 aa).

Positions 1–18 are cleaved as a signal peptide; it reads MKWVWALLLLAALGSGRA. 3 disulfide bridges follow: Cys-22/Cys-178, Cys-88/Cys-192, and Cys-138/Cys-147. Gln-116 is a substrate binding site. Arg-139 is modified (omega-N-methylarginine).

It belongs to the calycin superfamily. Lipocalin family. As to quaternary structure, interacts with TTR. Interaction with TTR prevents its loss by filtration through the kidney glomeruli. Interacts with STRA6. In terms of tissue distribution, detected in blood plasma and in urine (at protein level).

It is found in the secreted. Retinol-binding protein that mediates retinol transport in blood plasma. Delivers retinol from the liver stores to the peripheral tissues. Transfers the bound all-trans retinol to STRA6, that then facilitates retinol transport across the cell membrane. The protein is Retinol-binding protein 4 (RBP4) of Homo sapiens (Human).